Consider the following 707-residue polypeptide: Acyl-CoA ligase 891, peroxisomal (707 aa).

An ATP-binding site is contributed by 259–270; sequence INYTSGTTGPPK. Residues 525-549 form a fatty acid-binding region; it reads DGWFRTGDVCTIDEKGRFIIIDRRK. Residues 705–707 carry the Peroxisome targeting signal motif; that stretch reads AKL.

The protein belongs to the ATP-dependent AMP-binding enzyme family.

The protein localises to the peroxisome matrix. It carries out the reaction (4E,8E)-10-(4-hydroxy-6-methoxy-7-methyl-3-oxo-1,3-dihydro-2-benzofuran-5-yl)-4,8-dimethyldeca-4,8-dienoate + ATP + CoA = (4E,8E)-10-(4-hydroxy-6-methoxy-7-methyl-3-oxo-1,3-dihydro-2-benzofuran-5-yl)-4,8-dimethyldeca-4,8-dienoyl-CoA + AMP + diphosphate. It participates in secondary metabolite biosynthesis; terpenoid biosynthesis. Its function is as follows. Acyl-CoA ligase involved in the biosynthesis of mycophenolic acid (MPA), the first isolated antibiotic natural product in the world obtained from a culture of Penicillium brevicompactum in 1893. The peroxisomal acyl-CoA ligase 891 converts the intermediate MFDHMP-3C into MFDHMP-3C-CoA which impairs its diffusion from the peroxisome. The first step of the pathway is the synthesis of 5-methylorsellinic acid (5MOA) by the cytosolic polyketide synthase mpaC. 5MOA is then converted to the phthalide compound 5,7-dihydroxy-4,6-dimethylphthalide (DHMP) by the endoplasmic reticulum-bound cytochrome P450 monooxygenase mpaDE. MpaDE first catalyzes hydroxylation of 5-MOA to 4,6-dihydroxy-2-(hydroxymethyl)-3-methylbenzoic acid (DHMB). MpaDE then acts as a lactone synthase that catalyzes the ring closure to convert DHMB into DHMP. The next step is the prenylation of DHMP by the Golgi apparatus-associated prenyltransferase mpaA to yield farnesyl-DHMP (FDHMP). The ER-bound oxygenase mpaB then mediates the oxidative cleavage the C19-C20 double bond in FDHMP to yield FDHMP-3C via a mycophenolic aldehyde intermediate. The O-methyltransferase mpaG catalyzes the methylation of FDHMP-3C to yield MFDHMP-3C. After the cytosolic methylation of FDHMP-3C, MFDHMP-3C enters into peroxisomes probably via free diffusion due to its low molecular weight. Upon a peroxisomal CoA ligation reaction, catalyzed by a beta-oxidation component enzyme acyl-CoA ligase ACL891, MFDHMP-3C-CoA would then be restricted to peroxisomes for the following beta-oxidation pathway steps. The peroxisomal beta-oxidation machinery than converts MFDHMP-3C-CoA into MPA_CoA, via a beta-oxidation chain-shortening process. Finally mpaH acts as a peroxisomal acyl-CoA hydrolase with high substrate specificity toward MPA-CoA to release the final product MPA. The sequence is that of Acyl-CoA ligase 891, peroxisomal from Penicillium roqueforti (strain FM164).